We begin with the raw amino-acid sequence, 302 residues long: Sulfate adenylyltransferase subunit 2 (302 aa).

The protein belongs to the PAPS reductase family. CysD subfamily. As to quaternary structure, heterodimer composed of CysD, the smaller subunit, and CysN.

It carries out the reaction sulfate + ATP + H(+) = adenosine 5'-phosphosulfate + diphosphate. It functions in the pathway sulfur metabolism; hydrogen sulfide biosynthesis; sulfite from sulfate: step 1/3. In terms of biological role, with CysN forms the ATP sulfurylase (ATPS) that catalyzes the adenylation of sulfate producing adenosine 5'-phosphosulfate (APS) and diphosphate, the first enzymatic step in sulfur assimilation pathway. APS synthesis involves the formation of a high-energy phosphoric-sulfuric acid anhydride bond driven by GTP hydrolysis by CysN coupled to ATP hydrolysis by CysD. The polypeptide is Sulfate adenylyltransferase subunit 2 (Salmonella schwarzengrund (strain CVM19633)).